The chain runs to 248 residues: Probable phosphatase VFMJ11_A0899 (248 aa).

Residues H8, H10, H16, H41, E74, H101, H131, D193, and H195 each contribute to the Zn(2+) site.

Belongs to the PHP family. Zn(2+) is required as a cofactor.

This is Probable phosphatase VFMJ11_A0899 from Aliivibrio fischeri (strain MJ11) (Vibrio fischeri).